A 430-amino-acid chain; its full sequence is 3-deoxy-D-manno-octulosonic acid transferase (430 aa).

Residues 12-32 (AFLVAAFLAAAPRIFYKVVFH) form a helical; Signal-anchor membrane-spanning segment. Glutamate 66 (proton acceptor) is an active-site residue. Residues 274 to 275 (PR), 314 to 316 (MGI), and 341 to 344 (NLLE) contribute to the CMP site.

It belongs to the glycosyltransferase group 1 family. Glycosyltransferase 30 subfamily.

The protein localises to the cell inner membrane. The catalysed reaction is lipid IVA (E. coli) + CMP-3-deoxy-beta-D-manno-octulosonate = alpha-Kdo-(2-&gt;6)-lipid IVA (E. coli) + CMP + H(+). The enzyme catalyses alpha-Kdo-(2-&gt;6)-lipid IVA (E. coli) + CMP-3-deoxy-beta-D-manno-octulosonate = alpha-Kdo-(2-&gt;4)-alpha-Kdo-(2-&gt;6)-lipid IVA (E. coli) + CMP + H(+). It catalyses the reaction alpha-Kdo-(2-&gt;4)-alpha-Kdo-(2-&gt;6)-lipid IVA (E. coli) + CMP-3-deoxy-beta-D-manno-octulosonate = alpha-Kdo-(2-&gt;8)-alpha-Kdo-(2-&gt;4)-alpha-Kdo-(2-&gt;6)-lipid IVA (E. coli) + CMP + H(+). It participates in bacterial outer membrane biogenesis; LPS core biosynthesis. In terms of biological role, involved in lipopolysaccharide (LPS) biosynthesis. Catalyzes the transfer of three 3-deoxy-D-manno-octulosonate (Kdo) residues from CMP-Kdo to lipid IV(A), the tetraacyldisaccharide-1,4'-bisphosphate precursor of lipid A. Thus generates the genus-specific LPS epitope of Chlamydia, composed of the trisaccharide alpha-Kdo-(2-&gt;8)-alpha-Kdo-(2-&gt;4)-alpha-Kdo. The protein is 3-deoxy-D-manno-octulosonic acid transferase (waaA) of Chlamydia muridarum (strain MoPn / Nigg).